Here is a 306-residue protein sequence, read N- to C-terminus: Natural cytotoxicity triggering receptor 1 (306 aa).

Positions 1-21 (MSSTLRALLCLGLCLSQRISA) are cleaved as a signal peptide. Topologically, residues 22 to 257 (PKQTLPKPII…WDHTAQNLLR (236 aa)) are extracellular. 2 consecutive Ig-like domains span residues 42-100 (EKQA…SCIY) and 137-192 (GEKV…RCFG). 2 disulfides stabilise this stretch: cysteine 49/cysteine 98 and cysteine 144/cysteine 190. N-linked (GlcNAc...) asparagine glycosylation occurs at asparagine 216. Residues 258 to 278 (MGLAFLVLVALVCLLVEDWLS) traverse the membrane as a helical segment. At 279 to 306 (RKRTREQASRASTWEGRRRLNKHKDSEE) the chain is on the cytoplasmic side.

It belongs to the natural cytotoxicity receptor (NCR) family. Interacts with CD3Z and FCER1G. Expressed in NK cells.

Its subcellular location is the cell membrane. Its function is as follows. Cytotoxicity-activating receptor that may contribute to the increased efficiency of activated natural killer (NK) cells to mediate tumor cell lysis. This is Natural cytotoxicity triggering receptor 1 (NCR1) from Macaca fascicularis (Crab-eating macaque).